Here is a 595-residue protein sequence, read N- to C-terminus: uncharacterized protein (595 aa).

The signal sequence occupies residues 1 to 23 (MLSLSSPPWLLLLVLFFFANGSA). Residues N31, N63, N88, N112, N144, N187, N205, N389, N480, N492, and N506 are each glycosylated (N-linked (GlcNAc...) asparagine). Residues 61 to 83 (LENQTASSSNLNTNNEASDEQTG) are compositionally biased toward polar residues. 2 disordered regions span residues 61–119 (LENQ…VSSL) and 141–164 (TALN…TKGE). The segment covering 84–119 (NSNSNTSSHSRNINGLPSSNSNIDNANSNSSSVSSL) has biased composition (low complexity).

Its subcellular location is the secreted. This is an uncharacterized protein from Drosophila melanogaster (Fruit fly).